A 347-amino-acid chain; its full sequence is Phenylalanine--tRNA ligase alpha subunit (347 aa).

Residue Glu-261 coordinates Mg(2+).

This sequence belongs to the class-II aminoacyl-tRNA synthetase family. Phe-tRNA synthetase alpha subunit type 1 subfamily. Tetramer of two alpha and two beta subunits. Mg(2+) is required as a cofactor.

It is found in the cytoplasm. The catalysed reaction is tRNA(Phe) + L-phenylalanine + ATP = L-phenylalanyl-tRNA(Phe) + AMP + diphosphate + H(+). This Streptococcus equi subsp. equi (strain 4047) protein is Phenylalanine--tRNA ligase alpha subunit.